Here is a 435-residue protein sequence, read N- to C-terminus: ATP-dependent RNA helicase SUB2 (435 aa).

The interval Met1–Asp40 is disordered. A compositionally biased stretch (acidic residues) spans Glu7 to Glu17. Over residues Ala19 to Gly33 the composition is skewed to low complexity. The Q motif motif lies at Thr51 to Gln79. The region spanning Ile82–Ile257 is the Helicase ATP-binding domain. Ala95–Thr102 contributes to the ATP binding site. Positions Asp204–Asp207 match the DECD box motif. Residues Gly269–Ser430 enclose the Helicase C-terminal domain.

Belongs to the DEAD box helicase family. DECD subfamily.

Its subcellular location is the nucleus. It catalyses the reaction ATP + H2O = ADP + phosphate + H(+). Functionally, ATP-binding RNA helicase involved in transcription elongation and required for the export of mRNA out of the nucleus. SUB2 also plays a role in pre-mRNA splicing and spliceosome assembly. May be involved in rDNA and telomeric silencing, and maintenance of genome integrity. In Debaryomyces hansenii (strain ATCC 36239 / CBS 767 / BCRC 21394 / JCM 1990 / NBRC 0083 / IGC 2968) (Yeast), this protein is ATP-dependent RNA helicase SUB2 (SUB2).